The chain runs to 137 residues: 6,7-dimethyl-8-ribityllumazine synthase (137 aa).

5-amino-6-(D-ribitylamino)uracil is bound by residues Phe-11, 43–45 (SFD), and 67–69 (CVI). 72–73 (DT) serves as a coordination point for (2S)-2-hydroxy-3-oxobutyl phosphate. His-75 functions as the Proton donor in the catalytic mechanism. A 5-amino-6-(D-ribitylamino)uracil-binding site is contributed by Leu-100. Residue Arg-115 participates in (2S)-2-hydroxy-3-oxobutyl phosphate binding.

Belongs to the DMRL synthase family. Forms an icosahedral capsid composed of 60 subunits, arranged as a dodecamer of pentamers.

The catalysed reaction is (2S)-2-hydroxy-3-oxobutyl phosphate + 5-amino-6-(D-ribitylamino)uracil = 6,7-dimethyl-8-(1-D-ribityl)lumazine + phosphate + 2 H2O + H(+). The protein operates within cofactor biosynthesis; riboflavin biosynthesis; riboflavin from 2-hydroxy-3-oxobutyl phosphate and 5-amino-6-(D-ribitylamino)uracil: step 1/2. Catalyzes the formation of 6,7-dimethyl-8-ribityllumazine by condensation of 5-amino-6-(D-ribitylamino)uracil with 3,4-dihydroxy-2-butanone 4-phosphate. This is the penultimate step in the biosynthesis of riboflavin. This chain is 6,7-dimethyl-8-ribityllumazine synthase, found in Methanococcus maripaludis (strain C5 / ATCC BAA-1333).